A 269-amino-acid chain; its full sequence is uncharacterized protein (269 aa).

The RPE1 insert domain occupies 152–197; it reads RYFSKPAYRNAFKANTIRATTAYKKVFNDPSLGSTYPLEVPLGKMS.

This is an uncharacterized protein from Rickettsia prowazekii (strain Madrid E).